Consider the following 374-residue polypeptide: Speckle-type POZ protein A (374 aa).

In terms of domain architecture, MATH spans 31 to 161; the sequence is KFSYMWTINN…DDKLTLFCEV (131 aa). The required for nuclear localization stretch occupies residues 71-191; the sequence is VNPKGLDEES…PECRLADELG (121 aa). Residues 173–297 form the BTB domain; that stretch reads QNTMNMVKVP…MCEEALCSNL (125 aa). The homodimerization stretch occupies residues 297–355; the sequence is LSVENAAEILILADLHSADQLKTQAVDFINYHASDVMETSGWKSMVVSHPHLVAEAYRS.

Belongs to the Tdpoz family. As to quaternary structure, homodimer. Part of cullin-RING-based BCR (BTB-CUL3-RBX1) E3 ubiquitin-protein ligase complexes that contain CUL3 and SPOP, plus a target protein.

It is found in the nucleus. Its subcellular location is the nucleus speckle. It functions in the pathway protein modification; protein ubiquitination. In terms of biological role, component of a cullin-RING-based BCR (BTB-CUL3-RBX1) E3 ubiquitin-protein ligase complex that mediates the ubiquitination of target proteins, leading most often to their proteasomal degradation. The protein is Speckle-type POZ protein A (spop-a) of Xenopus laevis (African clawed frog).